Reading from the N-terminus, the 287-residue chain is Homoserine kinase (287 aa).

78-88 is a binding site for ATP; that stretch reads PLAHGLGSSSS.

This sequence belongs to the GHMP kinase family. Homoserine kinase subfamily.

Its subcellular location is the cytoplasm. The catalysed reaction is L-homoserine + ATP = O-phospho-L-homoserine + ADP + H(+). The protein operates within amino-acid biosynthesis; L-threonine biosynthesis; L-threonine from L-aspartate: step 4/5. Functionally, catalyzes the ATP-dependent phosphorylation of L-homoserine to L-homoserine phosphate. The chain is Homoserine kinase from Lactobacillus acidophilus (strain ATCC 700396 / NCK56 / N2 / NCFM).